We begin with the raw amino-acid sequence, 688 residues long: Beta-galactosidase BglY (688 aa).

A substrate-binding site is contributed by Arg-118. Residue Cys-122 participates in Zn(2+) binding. Asn-156 provides a ligand contact to substrate. Residue Glu-157 is the Proton donor of the active site. Positions 162, 164, and 167 each coordinate Zn(2+). The active-site Nucleophile is Glu-313. Residues Trp-321 and 361–364 each bind substrate; that span reads EKFH.

The protein belongs to the glycosyl hydrolase 42 family.

It carries out the reaction Hydrolysis of terminal non-reducing beta-D-galactose residues in beta-D-galactosides.. With respect to regulation, ca(2+), Mg(2+) and EDTA have little effect on enzyme activity at 1-10 mM. Zn(2+) at 3, 5, 7 or 10 mM inhibits activity by 20%, 30%, 40% and 65%, respectively. Functionally, hydrolyzes o-nitrophenyl-beta-D-galactopyranoside (ONPG) and p-nitrophenyl-beta-D-fucopyranoside (PNPF), but not p-nitrophenyl-beta-D-glucopyranoside (PNPG), p-nitrophenyl-beta-D-xylopyranoside (PNPX) or p-nitrophenyl-beta-D-arabinopyranoside (PNPA). Also hydrolyzes lactose, including lactose in milk. In Alicyclobacillus acidocaldarius subsp. acidocaldarius (strain ATCC 27009 / DSM 446 / BCRC 14685 / JCM 5260 / KCTC 1825 / NBRC 15652 / NCIMB 11725 / NRRL B-14509 / 104-IA) (Bacillus acidocaldarius), this protein is Beta-galactosidase BglY (bglY).